The following is a 517-amino-acid chain: MWIEIPECYEVLRNVFSKFRRHSLTAAMVKLLMRADTHVSFTVPAEEPVAKCTFSQVLAALSVSLGSMVVGFSSAYTSPALVSMKDRNITSFEVTDQSGSWVGGIMPLAGLVGGILGGPLIEYLGRKNTILATATPFIISWLLIACATHVAMVLVGRALSGFSVGVASLSLPVYLGETVQPEVRGTLGLLPTAFGNIGILLCFVAGNYMDWSELAFLGATLPVPFLILMFLIPETPRWYVSRGRDDRARKALQWLRGKKADVDPELKGIIKSHQDAERHASQSAMLDLLKKTNLKPLLISLGLMFFQQLSGINAVIFYTVQIFQDAGSTIDENLCTIIVGVVNFIATFIATLLIDRLGRKMLLYISDIAMIITLMTLGGFFYVKNNGGDVSHIGWLPLASFVIFVLGFSLGFGPIPWLMMGEILPGKIRGSAASVATAFNWSCTFVVTKTFADIIASIGTHGAFWMFGSVCVVGLVFVIMYVPETQGKSLEDIERKMCGRVRRMSSVANIKPLSFNM.

At M1–Q56 the chain is on the cytoplasmic side. A helical transmembrane segment spans residues V57 to T77. Residues S78–S100 are Extracellular-facing. An N-linked (GlcNAc...) asparagine glycan is attached at N88. A helical transmembrane segment spans residues W101–I121. Residues E122–T135 are Cytoplasmic-facing. Residues P136–G156 form a helical membrane-spanning segment. At R157–A158 the chain is on the extracellular side. The helical transmembrane segment at L159 to V179 threads the bilayer. Residues Q180–R184 are Cytoplasmic-facing. Residues G185 to A205 traverse the membrane as a helical segment. At G206 to S212 the chain is on the extracellular side. Residues E213–P233 form a helical membrane-spanning segment. The Cytoplasmic portion of the chain corresponds to E234–P296. Residues L297–F317 form a helical membrane-spanning segment. The Extracellular segment spans residues Y318 to N333. A helical transmembrane segment spans residues L334–I354. The Cytoplasmic portion of the chain corresponds to D355 to K360. Residues M361–F381 form a helical membrane-spanning segment. The Extracellular segment spans residues Y382–H392. Residues I393–G413 traverse the membrane as a helical segment. The Cytoplasmic segment spans residues P414–T437. A helical transmembrane segment spans residues A438–I458. Residues G459 to H461 lie on the Extracellular side of the membrane. The chain crosses the membrane as a helical span at residues G462–V482. At P483–M517 the chain is on the cytoplasmic side.

Belongs to the major facilitator superfamily. Sugar transporter (TC 2.A.1.1) family. Trehalose transporter subfamily.

Its subcellular location is the cell membrane. High-capacity facilitative transporter for trehalose. Does not transport maltose, sucrose or lactose. Mediates the bidirectional transfer of trehalose. Responsible for the transport of trehalose synthesized in the fat body and the incorporation of trehalose into other tissues that require a carbon source, thereby regulating trehalose levels in the hemolymph. This chain is Facilitated trehalose transporter Tret1, found in Culex quinquefasciatus (Southern house mosquito).